A 449-amino-acid polypeptide reads, in one-letter code: Guanine nucleotide-binding protein alpha-2 subunit (449 aa).

The tract at residues 1–91 (MGLCASSEKN…TATANTSGSQ (91 aa)) is disordered. A lipid anchor (N-myristoyl glycine) is attached at Gly-2. Cys-4 carries S-palmitoyl cysteine lipidation. Composition is skewed to polar residues over residues 7-23 (SEKN…SAGS) and 38-48 (QKTVRTVNTAN). Residues 49–59 (QQEKQQQRQQQ) are compositionally biased toward low complexity. Positions 72 to 91 (NGSINNAISPTATANTSGSQ) are enriched in polar residues. The 327-residue stretch at 122–448 (KELKVLLLGA…ENTLKDSGVL (327 aa)) folds into the G-alpha domain. Residues 125 to 138 (KVLLLGAGESGKST) are G1 motif. Residues Glu-133, Ser-134, Gly-135, Lys-136, Ser-137, Thr-138, Asp-245, Leu-270, Thr-276, Gly-299, Asn-365, Lys-366, Asp-368, and Ala-420 each coordinate GTP. Ser-137 lines the Mg(2+) pocket. A G2 motif region spans residues 268-276 (DILRSRQMT). Thr-276 is a binding site for Mg(2+). The G3 motif stretch occupies residues 292 to 301 (MHIYDVGGQR). A G4 motif region spans residues 361–368 (VLFLNKID). Residues 418–423 (TQATDT) are G5 motif.

The protein belongs to the G-alpha family. G(q) subfamily. As to quaternary structure, g proteins are composed of 3 units; alpha, beta and gamma. The alpha chain contains the guanine nucleotide binding site. GPA2 interacts with the kelch repeat beta-mimic proteins GPB1 and GPB2 and with the gamma subunit GPG1. Interacts with the G protein coupled receptor GPR1. Also interacts with regulators of G protein signaling (RGS) protein RGS2. Mg(2+) serves as cofactor. In terms of processing, myristoylation at Gly-2 and palmitoylation at Cys-4 are required for membrane localization and function of the protein.

It is found in the cell membrane. Alternates between an inactive form bound to GDP and an active form bound to GTP. Activated by the G protein coupled receptor (GPCR) GPR1, which serves as a guanine nucleotide-exchange factor (GEF), and inactivated by RGS2, acting as a GTPase-activating protein (GAP) for GPA2. Its function is as follows. Alpha subunit of the heterotrimeric guanine nucleotide-binding protein (G protein) involved in glucose-induced cAMP signaling. Binds to its cognate transmembrane receptor GPR1, which senses extracellular carbon sources, and activates cAMP-PKA signaling and governs diploid pseudohyphal differentiation and haploid invasive growth. The G protein beta-mimic proteins GPB1 and GPB2 inhibit GPA2-GPR1 coupling, probably to reduce signaling in the absence of glucose. The polypeptide is Guanine nucleotide-binding protein alpha-2 subunit (GPA2) (Saccharomyces cerevisiae (strain ATCC 204508 / S288c) (Baker's yeast)).